A 553-amino-acid polypeptide reads, in one-letter code: Interleukin-20 receptor subunit alpha (553 aa).

The signal sequence occupies residues 1–29 (MRAPGRPALRPLPLPPLLLLLLAAPWGRA). The Extracellular segment spans residues 30 to 250 (VPCVSGGLPK…KDQSSEFKAK (221 aa)). Fibronectin type-III domains follow at residues 37–135 (LPKP…FLET) and 136–242 (QIGP…TLKD). N-linked (GlcNAc...) asparagine glycosylation is found at asparagine 42, asparagine 83, asparagine 91, asparagine 182, asparagine 191, and asparagine 200. An intrachain disulfide couples cysteine 87 to cysteine 95. Cysteine 215 and cysteine 236 are disulfide-bonded. The chain crosses the membrane as a helical span at residues 251–271 (IIFWYVLPVSITVFLFSVMGY). The Cytoplasmic segment spans residues 272-553 (SIYRYIHVGK…EWGLYVQMEN (282 aa)). 2 disordered regions span residues 333–353 (SSDV…PPQE) and 462–515 (QEHT…LGEE). Positions 334–346 (SDVSSLNDPQPSG) are enriched in polar residues. A compositionally biased stretch (acidic residues) spans 499–513 (QDSEGCEPSEGDGLG).

Belongs to the type II cytokine receptor family. In terms of assembly, heterodimer with IL20RB and heterodimer with IL10RB. As to expression, widely expressed with highest levels in skin and testis and high levels in brain. Highly expressed in psoriatic skin.

The protein localises to the membrane. Its function is as follows. The IL20RA/IL20RB dimer is a receptor for IL19, IL20 and IL24. The IL20RA/IL10RB dimer is a receptor for IL26. This Homo sapiens (Human) protein is Interleukin-20 receptor subunit alpha (IL20RA).